The following is a 1157-amino-acid chain: Hephaestin (1157 aa).

The signal sequence occupies residues 1–18; the sequence is MKAGHLLWALLLMHSLWS. At 19–1109 the chain is on the extracellular side; that stretch reads IPTDGAIRNY…PIKDVEILSS (1091 aa). Plastocyanin-like domains are found at residues 24 to 206, 218 to 366, 370 to 559, 569 to 717, 730 to 902, and 910 to 1066; these read AIRN…LITC, QRKD…VDSC, PPVD…LLVC, KQKG…VSQC, ASRV…LVIC, and NGGR…SHEE. 2 N-linked (GlcNAc...) asparagine glycosylation sites follow: N49 and N54. Na(+) contacts are provided by G70 and Y73. H126 and H128 together coordinate Cu(2+). Residue H126 coordinates O2. Ca(2+) is bound by residues K134, D152, and D153. A glycan (N-linked (GlcNAc...) asparagine) is linked at N164. Residues C180 and C206 are joined by a disulfide bond. The Cu(2+) site is built by H186 and H188. H186 is a binding site for O2. Residue N236 is glycosylated (N-linked (GlcNAc...) asparagine). Residue S265 participates in Na(+) binding. C285 and C366 form a disulfide bridge. Cu(2+) contacts are provided by H304, C347, and H352. Y416, G425, and Y428 together coordinate Na(+). A disulfide bridge links C533 with C559. An N-linked (GlcNAc...) asparagine glycan is attached at N587. S616 is a binding site for Na(+). Residues C636 and C717 are joined by a disulfide bond. Cu(2+) contacts are provided by H655, C698, H703, and M708. 2 N-linked (GlcNAc...) asparagine glycosylation sites follow: N713 and N757. Positions 768 and 777 each coordinate Na(+). C876 and C902 form a disulfide bridge. N930 carries an N-linked (GlcNAc...) asparagine glycan. 8 residues coordinate Cu(2+): H999, H1002, H1004, H1044, C1045, H1046, H1050, and M1055. H1002 and H1004 together coordinate O2. H1046 lines the O2 pocket. The helical transmembrane segment at 1110–1130 threads the bilayer; the sequence is ALIAICVLLLLIALALGGVVW. The Cytoplasmic segment spans residues 1131-1157; it reads YQHRQRKLRRNRRSILDDSFKLLSLKQ. 3 positions are modified to phosphoserine: S1144, S1149, and S1154.

This sequence belongs to the multicopper oxidase family. As to quaternary structure, part of a complex composed of SLC40A1/ferroportin, TF/transferrin and HEPH/hephaestin that transfers iron from cells to transferrin. It depends on Cu cation as a cofactor.

The protein localises to the basolateral cell membrane. It carries out the reaction 4 Fe(2+) + O2 + 4 H(+) = 4 Fe(3+) + 2 H2O. Functionally, plasma membrane ferroxidase that mediates the extracellular conversion of ferrous/Fe(2+) iron into its ferric/Fe(3+) form. Couples ferroportin which specifically exports ferrous/Fe(2+) iron from cells to transferrin that only binds and shuttles extracellular ferric/Fe(3+) iron throughout the body. By helping iron transfer from cells to blood mainly contributes to dietary iron absorption by the intestinal epithelium and more generally regulates iron levels in the body. The protein is Hephaestin of Mus musculus (Mouse).